Consider the following 520-residue polypeptide: Cyclin-L2 (520 aa).

Cyclin-like regions lie at residues 81–183 and 196–280; these read ELIQ…RVLK and KIIV…KILQ. The interval 309–520 is disordered; the sequence is RAKGLLPPGS…DHPGHSRHRR (212 aa). Phosphoserine occurs at positions 330, 337, 347, and 350. A compositionally biased stretch (basic and acidic residues) spans 356–366; that stretch reads RKMEGPKKAKG. Residue S368 is modified to Phosphoserine. The interval 384–422 is RS; it reads RSREQSYSRSPSRSASPKRRKSDSGSTSGGSKSQSRSRS. The segment covering 407–429 has biased composition (low complexity); that stretch reads SGSTSGGSKSQSRSRSRSDSPPR. Positions 440–453 are enriched in basic and acidic residues; sequence SEVRGSRKSKDCKH. Over residues 454–471 the composition is skewed to basic residues; sequence LTQKPHKSRSRSSSRSRS. 2 stretches are compositionally biased toward basic and acidic residues: residues 472-481 and 489-514; these read RSRERTDSSG and YYRDQRRERSRSYERTGHRYERDHPG.

The protein belongs to the cyclin family. Cyclin L subfamily. In terms of assembly, interacts with CDK11A, CDK11B, CDK12, CDK13 and POLR2A, the hyperphosphorylated C-terminal domain (CTD) of RNA polymerase II. May form a ternary complex with CDK11B and casein kinase II (CKII). Interacts with pre-mRNA-splicing factors, including at least SRSF1, SRSF2 and SRSF7/SLU7.

It localises to the nucleus speckle. It is found in the nucleus. The protein localises to the nucleoplasm. Its function is as follows. Involved in pre-mRNA splicing. May induce cell death, possibly by acting on the transcription and RNA processing of apoptosis-related factors. This chain is Cyclin-L2 (Ccnl2), found in Rattus norvegicus (Rat).